The primary structure comprises 116 residues: Large ribosomal subunit protein bL17 (116 aa).

The protein belongs to the bacterial ribosomal protein bL17 family. Part of the 50S ribosomal subunit. Contacts protein L32.

The sequence is that of Large ribosomal subunit protein bL17 from Synechococcus sp. (strain JA-2-3B'a(2-13)) (Cyanobacteria bacterium Yellowstone B-Prime).